The chain runs to 660 residues: DNA ligase (660 aa).

NAD(+) contacts are provided by residues 33 to 37 (DFVYD), 82 to 83 (SL), and Glu-110. Lys-112 acts as the N6-AMP-lysine intermediate in catalysis. NAD(+) is bound by residues Arg-133, Glu-167, Lys-281, and Lys-305. Positions 396, 399, 412, and 417 each coordinate Zn(2+). Positions 583–660 (GENKLLAGKK…SFEDIKSYLD (78 aa)) constitute a BRCT domain.

The protein belongs to the NAD-dependent DNA ligase family. LigA subfamily. Mg(2+) serves as cofactor. Requires Mn(2+) as cofactor.

It carries out the reaction NAD(+) + (deoxyribonucleotide)n-3'-hydroxyl + 5'-phospho-(deoxyribonucleotide)m = (deoxyribonucleotide)n+m + AMP + beta-nicotinamide D-nucleotide.. Functionally, DNA ligase that catalyzes the formation of phosphodiester linkages between 5'-phosphoryl and 3'-hydroxyl groups in double-stranded DNA using NAD as a coenzyme and as the energy source for the reaction. It is essential for DNA replication and repair of damaged DNA. This chain is DNA ligase, found in Borreliella burgdorferi (strain ZS7) (Borrelia burgdorferi).